Here is a 389-residue protein sequence, read N- to C-terminus: Cytochrome B translational activator CBS2 (389 aa).

Its subcellular location is the mitochondrion. Functionally, translational activator of cytochrome b. The cytochrome b (coB) leader RNA may represent the target sequence for CBS1 and/ or CBS2. This is Cytochrome B translational activator CBS2 (CBS2) from Saccharomyces cerevisiae (strain ATCC 204508 / S288c) (Baker's yeast).